Consider the following 288-residue polypeptide: Proteasome subunit beta (288 aa).

Residues Met1 to Gly60 constitute a propeptide, removed in mature form; by autocatalysis. The active-site Nucleophile is Thr61.

The protein belongs to the peptidase T1B family. The 20S proteasome core is composed of 14 alpha and 14 beta subunits that assemble into four stacked heptameric rings, resulting in a barrel-shaped structure. The two inner rings, each composed of seven catalytic beta subunits, are sandwiched by two outer rings, each composed of seven alpha subunits. The catalytic chamber with the active sites is on the inside of the barrel. Has a gated structure, the ends of the cylinder being occluded by the N-termini of the alpha-subunits. Is capped by the proteasome-associated ATPase, ARC.

It is found in the cytoplasm. It catalyses the reaction Cleavage of peptide bonds with very broad specificity.. The protein operates within protein degradation; proteasomal Pup-dependent pathway. The formation of the proteasomal ATPase ARC-20S proteasome complex, likely via the docking of the C-termini of ARC into the intersubunit pockets in the alpha-rings, may trigger opening of the gate for substrate entry. Interconversion between the open-gate and close-gate conformations leads to a dynamic regulation of the 20S proteasome proteolysis activity. Functionally, component of the proteasome core, a large protease complex with broad specificity involved in protein degradation. This is Proteasome subunit beta from Catenulispora acidiphila (strain DSM 44928 / JCM 14897 / NBRC 102108 / NRRL B-24433 / ID139908).